A 192-amino-acid chain; its full sequence is uncharacterized protein (192 aa).

Positions 29-160 (HRQAAVLIPI…PLDIYRRGDS (132 aa)) constitute a Nudix hydrolase domain. Residues 67–89 (GAVDDTDASVIAAALREAEEEVA) carry the Nudix box motif. Mg(2+)-binding residues include Glu83 and Glu87.

This sequence belongs to the Nudix hydrolase family. PCD1 subfamily. The cofactor is Mn(2+). Mg(2+) serves as cofactor.

Functionally, probably mediates the hydrolysis of some nucleoside diphosphate derivatives. This is an uncharacterized protein from Shigella boydii serotype 4 (strain Sb227).